We begin with the raw amino-acid sequence, 80 residues long: Large ribosomal subunit protein bL31B (80 aa).

The protein belongs to the bacterial ribosomal protein bL31 family. Type B subfamily. In terms of assembly, part of the 50S ribosomal subunit.

In Methylobacillus flagellatus (strain ATCC 51484 / DSM 6875 / VKM B-1610 / KT), this protein is Large ribosomal subunit protein bL31B.